Here is a 567-residue protein sequence, read N- to C-terminus: Urease subunit alpha (567 aa).

A Urease domain is found at 129–567 (GGIDSHIHFI…LPLAQRYFLF (439 aa)). Residues H134, H136, and K217 each coordinate Ni(2+). At K217 the chain carries N6-carboxylysine. A substrate-binding site is contributed by H219. Ni(2+)-binding residues include H246 and H272. H320 functions as the Proton donor in the catalytic mechanism. D360 provides a ligand contact to Ni(2+).

The protein belongs to the metallo-dependent hydrolases superfamily. Urease alpha subunit family. Heterotrimer of UreA (gamma), UreB (beta) and UreC (alpha) subunits. Three heterotrimers associate to form the active enzyme. The cofactor is Ni cation. Post-translationally, carboxylation allows a single lysine to coordinate two nickel ions.

It localises to the cytoplasm. The enzyme catalyses urea + 2 H2O + H(+) = hydrogencarbonate + 2 NH4(+). It participates in nitrogen metabolism; urea degradation; CO(2) and NH(3) from urea (urease route): step 1/1. This chain is Urease subunit alpha, found in Pseudomonas entomophila (strain L48).